The following is a 325-amino-acid chain: Ribonucleoside-diphosphate reductase small chain (325 aa).

3 residues coordinate Fe cation: aspartate 74, glutamate 105, and histidine 108. Residue tyrosine 112 is part of the active site. Positions 168, 202, and 205 each coordinate Fe cation.

The protein belongs to the ribonucleoside diphosphate reductase small chain family. As to quaternary structure, heterodimer of a large and a small chain. It depends on Fe cation as a cofactor.

It carries out the reaction a 2'-deoxyribonucleoside 5'-diphosphate + [thioredoxin]-disulfide + H2O = a ribonucleoside 5'-diphosphate + [thioredoxin]-dithiol. Functionally, ribonucleoside-diphosphate reductase holoenzyme provides the precursors necessary for viral DNA synthesis. Allows virus growth in non-dividing cells. Catalyzes the biosynthesis of deoxyribonucleotides from the corresponding ribonucleotides. The protein is Ribonucleoside-diphosphate reductase small chain of Yaba-like disease virus (YLDV).